The primary structure comprises 694 residues: MTFETISVTLEEGKTLVFETGKIARQANGAVLARMQETWVFSSVCAATLEEPVDFLPLRVDYQEKFSSIGKTLGGFIKREGRPTEREILTSRLIDRSMRPSLPNRLMQDVQILSYVWSYDGVTLPDPIAICGVSAALAISDIPQINIVAGVRVGFINNTWVVNPTKAEMDVSRMELVLAGTEKAILMIEGHCDFFTEEQVIEAIEFGHKHIVTICKAIEDWQKQIGKEKNTSAVVPLPEQVQTAVNTLVEGKFSDLLQIKEKKAFEAASKQLENDIVEKLQEENEIFTPLNIKTAFKQAKSDYMRSLIRKQGLRSDGRSVTTIRPISIDTSFLPRTHGSCLFTRGETQTVAVCTLGSEAMAQRYEDLNGEGLAKFYLQYFFPPFSVGEVGRIGSPGRREIGHGKLAEKALSHALPDPAKFPYTIRIESNITESNGSSSMASVCGGCLALMDAGVPIKTPIAGIAMGLILDDDHVTILSDISGLEDHLGDMDFKVAGNAEGITAFQMDIKVEGITPEIMQAALAQAKSGRQNILETMKATLASPKTDLSQYAPRIETMQIKPNKIATVIGPGGKQIRQIIEEAGVQIDINDSGLVSISASSPQAIEKAKSIIEGLVGEVEVGKIYEGRVTSIVPFGAFVEILPGKEGLCHISEFSKQRIENVGDFVKQGDILPVKLLSINEKGQYKLSHKATLSE.

2 residues coordinate Mg(2+): Asp-485 and Asp-491. A KH domain is found at 552–611 (PRIETMQIKPNKIATVIGPGGKQIRQIIEEAGVQIDINDSGLVSISASSPQAIEKAKSII). Positions 621–689 (GKIYEGRVTS…EKGQYKLSHK (69 aa)) constitute an S1 motif domain.

This sequence belongs to the polyribonucleotide nucleotidyltransferase family. The cofactor is Mg(2+).

It localises to the cytoplasm. The catalysed reaction is RNA(n+1) + phosphate = RNA(n) + a ribonucleoside 5'-diphosphate. Functionally, involved in mRNA degradation. Catalyzes the phosphorolysis of single-stranded polyribonucleotides processively in the 3'- to 5'-direction. The chain is Polyribonucleotide nucleotidyltransferase from Chlamydia felis (strain Fe/C-56) (Chlamydophila felis).